The primary structure comprises 249 residues: tRNA pseudouridine synthase A (249 aa).

Asp53 acts as the Nucleophile in catalysis. Tyr111 is a substrate binding site.

Belongs to the tRNA pseudouridine synthase TruA family. As to quaternary structure, homodimer.

The catalysed reaction is uridine(38/39/40) in tRNA = pseudouridine(38/39/40) in tRNA. Functionally, formation of pseudouridine at positions 38, 39 and 40 in the anticodon stem and loop of transfer RNAs. The chain is tRNA pseudouridine synthase A from Streptococcus pyogenes serotype M3 (strain ATCC BAA-595 / MGAS315).